The following is a 339-amino-acid chain: Anthranilate phosphoribosyltransferase (339 aa).

Residues Gly79, 82–83 (GD), Thr87, 89–92 (NIST), 107–115 (KHGNRAVSS), and Ser119 contribute to the 5-phospho-alpha-D-ribose 1-diphosphate site. Gly79 lines the anthranilate pocket. Ser91 is a Mg(2+) binding site. Asn110 contacts anthranilate. Arg165 is an anthranilate binding site. Positions 224 and 225 each coordinate Mg(2+).

This sequence belongs to the anthranilate phosphoribosyltransferase family. As to quaternary structure, homodimer. Requires Mg(2+) as cofactor.

The enzyme catalyses N-(5-phospho-beta-D-ribosyl)anthranilate + diphosphate = 5-phospho-alpha-D-ribose 1-diphosphate + anthranilate. It functions in the pathway amino-acid biosynthesis; L-tryptophan biosynthesis; L-tryptophan from chorismate: step 2/5. Catalyzes the transfer of the phosphoribosyl group of 5-phosphorylribose-1-pyrophosphate (PRPP) to anthranilate to yield N-(5'-phosphoribosyl)-anthranilate (PRA). The polypeptide is Anthranilate phosphoribosyltransferase (Geobacillus sp. (strain WCH70)).